Reading from the N-terminus, the 721-residue chain is MGTPASGRKRTPVKDRFSAEDEALSNIAREAEARLAAKRAARAEARDIRMRELERQQKEYSLHSFDRKWGQIQKWLEDSERARYSHRSSHHRPYLGVEDALSIRSVGSHRYDMFKDRSSRLSSLNHSYSHSHGMKKRSSDSHKDLLSGLYFDQRNYSSLRHSKPTSAYYTRQSSSLYSDPLATYKSDRASPTANSGLLRSASLASLYNGGLYNPYGPRTPSECSYYSSRISSARSSPGFTNDDTASIVSSDRASRGRRESVVSAADYFSRSNRRGSVVSEVDDISIPDLSSLDEKSDKQYAENYTRPSSRNSASATTPLSGNSSRRGSGDTSSLIDPDTSLSELRDIYDLKDQIQDVEGRYMQGLKELKESLSEVEEKYKKAMVSNAQLDNEKNNLIYQVDTLKDVIEEQEEQMAEFYRENEEKSKELERQKHMCSVLQHKMEELKEGLRQRDELIEEKQRMQQKIDTMTKEVFDLQETLLWKDKKIGALEKQKEYIACLRNERDMLREELADLQETVKTGEKHGLVIIPDGTPNGDVSHEPVAGAITVVSQEAAQVLESAGEGPLDVRLRKLAGEKEELLSQIRKLKLQLEEERQKCSRNDGTVGDLAGLQNGSDLQFIEMQRDANRQISEYKFKLSKAEQDITTLEQSISRLEGQVLRYKTAAENAEKVEDELKAEKRKLQRELRTALDKIEEMEMTNSHLAKRLEKMKANRTALLAQQ.

The interval 1–370 is DVL3-binding; the sequence is MGTPASGRKR…YMQGLKELKE (370 aa). A Phosphoserine modification is found at Ser-18. Positions 22 to 49 form a coiled coil; that stretch reads EALSNIAREAEARLAAKRAARAEARDIR. A phosphoserine mark is found at Gly-96, Leu-101, Tyr-168, Ser-173, Ser-190, and Ser-202. Disordered regions lie at residues 232–262 and 295–338; these read SARS…ESVV and KSDK…IDPD. Polar residues-rich tracts occupy residues 237–251 and 305–338; these read PGFT…VSSD and TRPS…IDPD. 5 positions are modified to phosphoserine: Ser-309, Ser-312, Ser-320, Ser-324, and Ser-328. A Phosphothreonine modification is found at Thr-331. Phosphoserine occurs at positions 332 and 333. Coiled coils occupy residues 349-524 and 566-714; these read DLKD…GEKH and LDVR…KANR.

This sequence belongs to the LRRFIP family. As to quaternary structure, interacts (via N-terminus) with DVL3. Interacts with FLII. Weakly interacts with MYD88 in resting cells. Following LPS-stimulation, the interaction with MYD88 is rapidly enhanced; the complex gradually dissociates to basal levels after 6 hours of stimulation. Interaction with MYD88 is regulated by LPS-induced phosphorylation at Ser-202. In the presence of LPS, competes with FLII for MYD88-binding. Post-translationally, ser-190 and Ser-202 are phosphorylated in response to LPS stimulation. Ser-202 phosphorylation regulates the LPS-induced interaction with MYD88. Widely expressed, with highest levels in heart and skeletal muscle.

May function as activator of the canonical Wnt signaling pathway, in association with DVL3, upstream of CTNNB1/beta-catenin. Positively regulates Toll-like receptor (TLR) signaling in response to agonist probably by competing with the negative FLII regulator for MYD88-binding. The chain is Leucine-rich repeat flightless-interacting protein 2 (LRRFIP2) from Homo sapiens (Human).